A 316-amino-acid polypeptide reads, in one-letter code: MTDTTSKTRAGFAAIIGAPNAGKSTLVNRMVGAKVSIVTQKVQTTRFPVRGVAIEGDTQIVLVDTPGIFSPRRRLDRAMVRAAWAGSEEAEATVHLVDVQAELASRADKATPGEYRSAQDVQTIIEGLKAADRKVILALNKIDGIKRDTLLAVAKDFFDTGVYSDVFMISASTGAGVEDLTAKLVSMMPEGPWLYPEDQTADLPARLLAAEITREKVYLRVHEELPYAATVETTAFEERKDGSVRIEQTILVEREGQRVIVIGKGGQTLKWIGQASREELCDILDRKVHLFLHVKVKENWAEERGLFSDIGLDFDV.

The Era-type G domain occupies arginine 9 to glutamate 190. A G1 region spans residues glycine 17–serine 24. A GTP-binding site is contributed by glycine 17–serine 24. The tract at residues glutamine 43 to phenylalanine 47 is G2. The tract at residues aspartate 64–glycine 67 is G3. Residues aspartate 64–isoleucine 68 and asparagine 140–aspartate 143 contribute to the GTP site. The G4 stretch occupies residues asparagine 140–aspartate 143. The tract at residues isoleucine 169–alanine 171 is G5. In terms of domain architecture, KH type-2 spans valine 221–glutamate 298.

This sequence belongs to the TRAFAC class TrmE-Era-EngA-EngB-Septin-like GTPase superfamily. Era GTPase family. In terms of assembly, monomer.

The protein localises to the cytoplasm. Its subcellular location is the cell inner membrane. An essential GTPase that binds both GDP and GTP, with rapid nucleotide exchange. Plays a role in 16S rRNA processing and 30S ribosomal subunit biogenesis and possibly also in cell cycle regulation and energy metabolism. The chain is GTPase Era from Caulobacter vibrioides (strain ATCC 19089 / CIP 103742 / CB 15) (Caulobacter crescentus).